Consider the following 202-residue polypeptide: dITP/XTP pyrophosphatase (202 aa).

Residue 10–15 (TGNAGK) coordinates substrate. Mg(2+) is bound by residues Asp46 and Asp75. The Proton acceptor role is filled by Asp75. Residues Ser76, 160 to 163 (FGYD), Lys183, and 188 to 189 (HR) contribute to the substrate site.

Belongs to the HAM1 NTPase family. In terms of assembly, homodimer. The cofactor is Mg(2+).

It carries out the reaction XTP + H2O = XMP + diphosphate + H(+). The enzyme catalyses dITP + H2O = dIMP + diphosphate + H(+). The catalysed reaction is ITP + H2O = IMP + diphosphate + H(+). Pyrophosphatase that catalyzes the hydrolysis of nucleoside triphosphates to their monophosphate derivatives, with a high preference for the non-canonical purine nucleotides XTP (xanthosine triphosphate), dITP (deoxyinosine triphosphate) and ITP. Seems to function as a house-cleaning enzyme that removes non-canonical purine nucleotides from the nucleotide pool, thus preventing their incorporation into DNA/RNA and avoiding chromosomal lesions. The protein is dITP/XTP pyrophosphatase of Idiomarina loihiensis (strain ATCC BAA-735 / DSM 15497 / L2-TR).